Consider the following 340-residue polypeptide: Lipase chaperone (340 aa).

The chain crosses the membrane as a helical span at residues 4–24 (ILLLIPLAFAASLAWFVWLEP). The tract at residues 29-51 (ETAPPASPQAGADRAPPAASAGE) is disordered. A compositionally biased stretch (low complexity) spans 36–51 (PQAGADRAPPAASAGE).

This sequence belongs to the lipase chaperone family.

It localises to the cell inner membrane. May be involved in the folding of the extracellular lipase during its passage through the periplasm. This Pseudomonas aeruginosa (strain ATCC 15692 / DSM 22644 / CIP 104116 / JCM 14847 / LMG 12228 / 1C / PRS 101 / PAO1) protein is Lipase chaperone (lifO).